The sequence spans 304 residues: ATP phosphoribosyltransferase (304 aa).

It belongs to the ATP phosphoribosyltransferase family. Long subfamily. It depends on Mg(2+) as a cofactor.

Its subcellular location is the cytoplasm. It catalyses the reaction 1-(5-phospho-beta-D-ribosyl)-ATP + diphosphate = 5-phospho-alpha-D-ribose 1-diphosphate + ATP. The protein operates within amino-acid biosynthesis; L-histidine biosynthesis; L-histidine from 5-phospho-alpha-D-ribose 1-diphosphate: step 1/9. Its activity is regulated as follows. Feedback inhibited by histidine. In terms of biological role, catalyzes the condensation of ATP and 5-phosphoribose 1-diphosphate to form N'-(5'-phosphoribosyl)-ATP (PR-ATP). Has a crucial role in the pathway because the rate of histidine biosynthesis seems to be controlled primarily by regulation of HisG enzymatic activity. The protein is ATP phosphoribosyltransferase of Xanthomonas campestris pv. campestris (strain 8004).